Consider the following 524-residue polypeptide: Na(+)/H(+) antiporter NhaB (524 aa).

Helical transmembrane passes span Ile23–Ala43, Gly44–Leu64, Leu97–Phe117, Leu120–Phe140, Phe144–Ile164, Leu203–Pro223, Phe236–Leu256, Ala304–Ile324, Phe354–Phe374, Leu392–Val412, Ala448–Ile468, and Val476–Phe496.

It belongs to the NhaB Na(+)/H(+) (TC 2.A.34) antiporter family.

The protein localises to the cell inner membrane. It catalyses the reaction 2 Na(+)(in) + 3 H(+)(out) = 2 Na(+)(out) + 3 H(+)(in). Functionally, na(+)/H(+) antiporter that extrudes sodium in exchange for external protons. The protein is Na(+)/H(+) antiporter NhaB of Edwardsiella ictaluri (strain 93-146).